The chain runs to 334 residues: L-lactate dehydrogenase C chain (334 aa).

NAD(+) contacts are provided by residues 30–58, arginine 100, and asparagine 139; that span reads GQVG…LEDK. Residues asparagine 139 and arginine 170 each coordinate substrate. Residue histidine 194 is the Proton acceptor of the active site. Residue threonine 249 coordinates substrate.

Belongs to the LDH/MDH superfamily. LDH family. In terms of assembly, homotetramer.

It localises to the cytoplasm. The catalysed reaction is (S)-lactate + NAD(+) = pyruvate + NADH + H(+). The protein operates within fermentation; pyruvate fermentation to lactate; (S)-lactate from pyruvate: step 1/1. This chain is L-lactate dehydrogenase C chain (ldhc), found in Xenopus laevis (African clawed frog).